The sequence spans 784 residues: Copal-8-ol diphosphate hydratase TPSSA9, chloroplastic (784 aa).

R240 serves as a coordination point for substrate. Residues D372 and D374 each contribute to the Mg(2+) site. The DXDD motif motif lies at D372–D375. A substrate-binding site is contributed by R459.

Belongs to the terpene synthase family.

Its subcellular location is the plastid. It is found in the chloroplast. The catalysed reaction is (2E,6E,10E)-geranylgeranyl diphosphate + H2O = 8-hydroxycopalyl diphosphate. Its pathway is secondary metabolite biosynthesis; terpenoid biosynthesis. In terms of biological role, involved in the biosynthesis of labdane-type diterpenoid including sclareol, a diterpene-diol that is used as fragrance and flavoring, and has anticancer effects (able to kill leukemic and colon cancer cells by apoptosis). Sclareol can also be used as synthesis precursor of ambergris substitution fragance products such as ambrox. Terpene synthase that produces 8-hydroxycopalyl diphosphate from geranylgeranyl diphosphate (GGPP). The polypeptide is Copal-8-ol diphosphate hydratase TPSSA9, chloroplastic (Salvia sclarea (Clary sage)).